Consider the following 1980-residue polypeptide: Sodium channel protein type 8 subunit alpha (1980 aa).

2 disordered regions span residues M1–E20 and R28–G62. Topologically, residues M1–S132 are cytoplasmic. A compositionally biased stretch (basic and acidic residues) spans R28–A61. The I repeat unit spans residues I114–Q442. A helical membrane pass occupies residues V133–F151. At S152–S158 the chain is on the extracellular side. A helical membrane pass occupies residues K159–A179. Residues R180–P193 lie on the Cytoplasmic side of the membrane. The chain crosses the membrane as a helical span at residues W194 to V211. At N212–S217 the chain is on the extracellular side. N215 carries an N-linked (GlcNAc...) asparagine glycan. The chain crosses the membrane as a helical span at residues A218–I234. Over P235 to D253 the chain is Cytoplasmic. The chain crosses the membrane as a helical span at residues V254–F273. The Extracellular segment spans residues M274–T355. The cysteines at positions 281 and 333 are disulfide-linked. N-linked (GlcNAc...) asparagine glycans are attached at residues N289, N295, and N308. A glycan (N-linked (GlcNAc...) (high mannose) asparagine) is linked at N326. The pore-forming intramembrane region spans F356–L380. E373 provides a ligand contact to Na(+). Topologically, residues R381–Y387 are extracellular. A helical transmembrane segment spans residues M388–A408. Topologically, residues V409–P753 are cytoplasmic. Disordered regions lie at residues A446–R530 and F568–F602. The span at P474 to K486 shows a compositional bias: low complexity. The segment covering K489 to Q500 has biased composition (basic residues). Composition is skewed to basic and acidic residues over residues K501–R530 and D586–F602. Residues S518 and S520 each carry the phosphoserine modification. Residues C735–G1007 form an II repeat. Residues F754–M772 form a helical membrane-spanning segment. The Extracellular segment spans residues E773 to H783. A helical membrane pass occupies residues V784–K803. Over L804–W817 the chain is Cytoplasmic. The chain crosses the membrane as a helical span at residues N818–V837. Topologically, residues E838–G839 are extracellular. The helical transmembrane segment at L840–S857 threads the bilayer. Residues W858–G873 lie on the Cytoplasmic side of the membrane. The chain crosses the membrane as a helical span at residues A874–V892. Over G893–D921 the chain is Extracellular. The cysteines at positions 906 and 912 are disulfide-linked. Residues F922 to W942 constitute an intramembrane region (pore-forming). Na(+) is bound by residues E936 and E939. Topologically, residues D943–I955 are extracellular. A disulfide bond links C944 and C953. Residues V956–L976 form a helical membrane-spanning segment. The Cytoplasmic portion of the chain corresponds to L977–W1199. The disordered stretch occupies residues N1107–V1148. The stretch at L1180–L1495 is one III repeat. The chain crosses the membrane as a helical span at residues F1200–F1217. Topologically, residues E1218–T1230 are extracellular. A helical membrane pass occupies residues I1231–L1249. The Cytoplasmic segment spans residues K1250–A1263. A helical transmembrane segment spans residues W1264–N1282. At A1283–G1290 the chain is on the extracellular side. Residues A1291 to R1309 traverse the membrane as a helical segment. At F1310–S1326 the chain is on the cytoplasmic side. The helical transmembrane segment at I1327–V1346 threads the bilayer. At N1347–V1399 the chain is on the extracellular side. C1356 and C1376 are oxidised to a cystine. N-linked (GlcNAc...) asparagine glycosylation is found at N1358, N1372, and N1383. Positions G1400–A1421 form an intramembrane region, pore-forming. The Extracellular segment spans residues A1422 to I1438. Residues Y1439–I1460 traverse the membrane as a helical segment. Topologically, residues G1461–A1523 are cytoplasmic. S1497 bears the Phosphoserine; by PKC mark. One copy of the IV repeat lies at I1504–Q1801. A helical transmembrane segment spans residues F1524–V1541. Over E1542–N1552 the chain is Extracellular. The helical transmembrane segment at I1553–L1571 threads the bilayer. Topologically, residues K1572–I1583 are cytoplasmic. Residues G1584–F1601 form a helical membrane-spanning segment. Residues L1602 to T1614 are Extracellular-facing. A helical membrane pass occupies residues L1615–I1631. The Cytoplasmic segment spans residues K1632 to A1650. Residues L1651–F1668 traverse the membrane as a helical segment. Topologically, residues G1669–T1690 are extracellular. The pore-forming intramembrane region spans F1691–P1713. The Extracellular segment spans residues I1714–G1742. Residues C1721 and C1736 are joined by a disulfide bond. A helical membrane pass occupies residues I1743 to I1765. Over L1766–C1980 the chain is Cytoplasmic. The IQ domain occupies E1895 to K1924. The tract at residues S1922–C1980 is disordered. A compositionally biased stretch (polar residues) spans T1938–S1949. Residues T1951–C1980 are compositionally biased toward basic and acidic residues.

It belongs to the sodium channel (TC 1.A.1.10) family. Nav1.6/SCN8A subfamily. As to quaternary structure, the voltage-sensitive sodium channel consists of an ion-conducting pore-forming alpha subunit regulated by one or more beta-1 (SCN1B), beta-2 (SCN2B), beta-3 (SCN3B) and/or beta-4 (SCN4B) subunits. Beta-1 (SCN1B) and beta-3 (SCN3B) are non-covalently associated with alpha, while beta-2 (SCN2B) and beta-4 (SCN4B) are covalently linked by disulfide bonds. Interacts with NEDD4 and NEDD4L. Interacts with FGF13. Interacts with FGF14, GBG3, GBB2 and SCN1B. Interacts with TMEM233. Interacts with the conotoxin GVIIJ. Interacts with the spider beta/delta-theraphotoxin-Pre1a. Interacts with CALM1; the interaction modulates the inactivation rate of SCN8A. May be ubiquitinated by NEDD4L; which would promote its endocytosis. Post-translationally, phosphorylation at Ser-1497 by PKC in a highly conserved cytoplasmic loop slows inactivation of the sodium channel and reduces peak sodium currents. Expressed in the hippocampus with increased expression in epileptic tissue compared to normal adjacent tissue (at protein level). In terms of tissue distribution, expressed in non-neuronal tissues, such as monocytes/macrophages.

It is found in the cell membrane. The protein resides in the cell projection. Its subcellular location is the axon. It localises to the cytoplasmic vesicle. The protein localises to the podosome. It catalyses the reaction Na(+)(in) = Na(+)(out). With respect to regulation, inhibited by tetrodotoxin and, more weakly, by its metabolite 4,9-ah-tetrodotoxin. Its function is as follows. Pore-forming subunit of a voltage-gated sodium channel complex assuming opened or closed conformations in response to the voltage difference across membranes and through which sodium ions selectively pass along their electrochemical gradient. Contributes to neuronal excitability by regulating action potential threshold and propagation. In terms of biological role, more specifically expressed in non-neuronal cells, could play a role in sodium release from intracellular compartments and participate in the control of podosomes formation and macrophages adhesion and movement. This is Sodium channel protein type 8 subunit alpha from Homo sapiens (Human).